The chain runs to 246 residues: Bidirectional sugar transporter SWEET3a (246 aa).

The Extracellular portion of the chain corresponds to methionine 1–arginine 6. Residues phenylalanine 7 to threonine 27 traverse the membrane as a helical segment. The 90-residue stretch at phenylalanine 7–arginine 96 folds into the MtN3/slv 1 domain. Over phenylalanine 28 to cysteine 42 the chain is Cytoplasmic. A helical transmembrane segment spans residues isoleucine 43–valine 63. The Extracellular segment spans residues serine 64 to serine 74. Asparagine 69 is a glycosylation site (N-linked (GlcNAc...) asparagine). A helical transmembrane segment spans residues isoleucine 75–proline 95. Topologically, residues arginine 96–glutamine 101 are cytoplasmic. The helical transmembrane segment at valine 102–phenylalanine 122 threads the bilayer. The Extracellular portion of the chain corresponds to serine 123–lysine 131. The helical transmembrane segment at valine 132–alanine 152 threads the bilayer. The MtN3/slv 2 domain maps to phenylalanine 133 to lysine 217. Residues methionine 153 to proline 166 are Cytoplasmic-facing. The chain crosses the membrane as a helical span at residues phenylalanine 167–glycine 187. The Extracellular segment spans residues arginine 188–phenylalanine 191. Residues isoleucine 192–isoleucine 212 form a helical membrane-spanning segment. Topologically, residues tyrosine 213–proline 246 are cytoplasmic.

The protein belongs to the SWEET sugar transporter family. As to quaternary structure, forms homooligomers and/or heterooligomers.

It is found in the cell membrane. In terms of biological role, mediates both low-affinity uptake and efflux of sugar across the plasma membrane. The polypeptide is Bidirectional sugar transporter SWEET3a (SWEET3A) (Oryza sativa subsp. japonica (Rice)).